The following is a 206-amino-acid chain: MMTRLETLKNNLQATLGQDIALTEALGELTLEVPADQWLTVCNKLRTDAGLRFESCIDLCGMDYQTWGDGSHANAHDEPARPGRFAVVIHLLSIEHNWRLRVRTYAVDEEFPIVASLIECWPGVNWYEREAFDLYGIVFEGHPDLRRILTDYGFIGHPFRKDFPLSGTVEMRYDPEQKRVIYQPVTIDPREITPRIVRESSYGMGR.

This sequence belongs to the complex I 30 kDa subunit family. NDH-1 is composed of 14 different subunits. Subunits NuoB, C, D, E, F, and G constitute the peripheral sector of the complex.

It is found in the cell inner membrane. The catalysed reaction is a quinone + NADH + 5 H(+)(in) = a quinol + NAD(+) + 4 H(+)(out). Its function is as follows. NDH-1 shuttles electrons from NADH, via FMN and iron-sulfur (Fe-S) centers, to quinones in the respiratory chain. The immediate electron acceptor for the enzyme in this species is believed to be ubiquinone. Couples the redox reaction to proton translocation (for every two electrons transferred, four hydrogen ions are translocated across the cytoplasmic membrane), and thus conserves the redox energy in a proton gradient. The protein is NADH-quinone oxidoreductase subunit C of Bordetella avium (strain 197N).